Consider the following 35-residue polypeptide: Sorbin and SH3 domain-containing protein 1 (35 aa).

In terms of domain architecture, SoHo spans 1 to 8 (LNRDDDSD). Residue Ser15 is modified to Phosphoserine. An SH3 domain is found at 22–35 (CDDGWFVGTSRRTK).

As to quaternary structure, interacts with the long isoform of AFDN and with VCL. AFDN and VCL bind to SORBS1 in a competitive manner and do not form a ternary complex. Interacts with ABL1, CBL, CBLB and INPPL1/SHIP2 through the third SH3 domain. Interaction with ABL1 occurs only after insulin stimulation while this has no effect on the interaction with INPPL1. Interacts with the insulin receptor but dissociates from it following insulin stimulation. Also interacts with SCA7, PTK2/FAK1 and flotillin. Interacts (via SH3 domain 2) with PXN. Interacts (via third SH3 domain) with the Ten-1 ICD form of TENM1; the interaction induces the translocation of SORBS1 to the nucleus. Post-translationally, O-glycosylated.

Its subcellular location is the cell junction. The protein resides in the adherens junction. The protein localises to the cell membrane. It is found in the cytoplasm. It localises to the cytoskeleton. Its subcellular location is the focal adhesion. The protein resides in the nucleus. The protein localises to the nucleus matrix. Functionally, plays a role in tyrosine phosphorylation of CBL by linking CBL to the insulin receptor. Required for insulin-stimulated glucose transport. Involved in formation of actin stress fibers and focal adhesions. This is Sorbin and SH3 domain-containing protein 1 from Rattus norvegicus (Rat).